The following is a 1378-amino-acid chain: DNA-directed RNA polymerase subunit beta (1378 aa).

The protein belongs to the RNA polymerase beta chain family. In terms of assembly, the RNAP catalytic core consists of 2 alpha, 1 beta, 1 beta' and 1 omega subunit. When a sigma factor is associated with the core the holoenzyme is formed, which can initiate transcription.

The catalysed reaction is RNA(n) + a ribonucleoside 5'-triphosphate = RNA(n+1) + diphosphate. Functionally, DNA-dependent RNA polymerase catalyzes the transcription of DNA into RNA using the four ribonucleoside triphosphates as substrates. This chain is DNA-directed RNA polymerase subunit beta, found in Ruegeria pomeroyi (strain ATCC 700808 / DSM 15171 / DSS-3) (Silicibacter pomeroyi).